A 249-amino-acid chain; its full sequence is Triosephosphate isomerase (249 aa).

9–11 (NWK) is a substrate binding site. Histidine 95 functions as the Electrophile in the catalytic mechanism. Residue glutamate 165 is the Proton acceptor of the active site. Substrate contacts are provided by residues glycine 171, serine 210, and 231–232 (GG).

This sequence belongs to the triosephosphate isomerase family. In terms of assembly, homodimer.

Its subcellular location is the cytoplasm. It carries out the reaction D-glyceraldehyde 3-phosphate = dihydroxyacetone phosphate. It participates in carbohydrate biosynthesis; gluconeogenesis. It functions in the pathway carbohydrate degradation; glycolysis; D-glyceraldehyde 3-phosphate from glycerone phosphate: step 1/1. Its function is as follows. Involved in the gluconeogenesis. Catalyzes stereospecifically the conversion of dihydroxyacetone phosphate (DHAP) to D-glyceraldehyde-3-phosphate (G3P). This chain is Triosephosphate isomerase, found in Hyphomonas neptunium (strain ATCC 15444).